The chain runs to 211 residues: Thymidylate kinase (211 aa).

12 to 19 provides a ligand contact to ATP; sequence GIDGSGKS.

The protein belongs to the thymidylate kinase family.

The catalysed reaction is dTMP + ATP = dTDP + ADP. Functionally, phosphorylation of dTMP to form dTDP in both de novo and salvage pathways of dTTP synthesis. This Ruegeria pomeroyi (strain ATCC 700808 / DSM 15171 / DSS-3) (Silicibacter pomeroyi) protein is Thymidylate kinase.